A 763-amino-acid polypeptide reads, in one-letter code: Protein translocase subunit SecA 2 (763 aa).

ATP is bound by residues glutamine 83, 101–105 (GEGKT), and aspartate 490.

This sequence belongs to the SecA family. As to quaternary structure, monomer and homodimer. Part of the essential Sec protein translocation apparatus which comprises SecA, SecYEG and auxiliary proteins SecDF. Other proteins may also be involved.

Its subcellular location is the cell membrane. The protein localises to the cytoplasm. The catalysed reaction is ATP + H2O + cellular proteinSide 1 = ADP + phosphate + cellular proteinSide 2.. Part of the Sec protein translocase complex. Interacts with the SecYEG preprotein conducting channel. Has a central role in coupling the hydrolysis of ATP to the transfer of proteins into and across the cell membrane, serving as an ATP-driven molecular motor driving the stepwise translocation of polypeptide chains across the membrane. This Corynebacterium glutamicum (strain ATCC 13032 / DSM 20300 / JCM 1318 / BCRC 11384 / CCUG 27702 / LMG 3730 / NBRC 12168 / NCIMB 10025 / NRRL B-2784 / 534) protein is Protein translocase subunit SecA 2.